The chain runs to 269 residues: NAD kinase (269 aa).

The Proton acceptor role is filled by Asp-62. NAD(+)-binding positions include 62–63, 130–131, Lys-141, Arg-158, Asp-160, 171–176, Ala-195, and Gln-229; these read DG, NE, and TAYAMS.

It belongs to the NAD kinase family. A divalent metal cation serves as cofactor.

It is found in the cytoplasm. The enzyme catalyses NAD(+) + ATP = ADP + NADP(+) + H(+). Its function is as follows. Involved in the regulation of the intracellular balance of NAD and NADP, and is a key enzyme in the biosynthesis of NADP. Catalyzes specifically the phosphorylation on 2'-hydroxyl of the adenosine moiety of NAD to yield NADP. This Methanospirillum hungatei JF-1 (strain ATCC 27890 / DSM 864 / NBRC 100397 / JF-1) protein is NAD kinase.